Here is a 117-residue protein sequence, read N- to C-terminus: Large ribosomal subunit protein bL20c (117 aa).

The protein belongs to the bacterial ribosomal protein bL20 family.

It is found in the plastid. The protein resides in the chloroplast. Functionally, binds directly to 23S ribosomal RNA and is necessary for the in vitro assembly process of the 50S ribosomal subunit. It is not involved in the protein synthesizing functions of that subunit. In Nasturtium officinale (Watercress), this protein is Large ribosomal subunit protein bL20c.